The following is a 229-amino-acid chain: Large ribosomal subunit protein uL1 (229 aa).

The protein belongs to the universal ribosomal protein uL1 family. Part of the 50S ribosomal subunit.

Its function is as follows. Binds directly to 23S rRNA. The L1 stalk is quite mobile in the ribosome, and is involved in E site tRNA release. In terms of biological role, protein L1 is also a translational repressor protein, it controls the translation of the L11 operon by binding to its mRNA. In Listeria monocytogenes serovar 1/2a (strain ATCC BAA-679 / EGD-e), this protein is Large ribosomal subunit protein uL1.